The following is a 207-amino-acid chain: dTDP-4-dehydrorhamnose 3-epimerase (207 aa).

Substrate contacts are provided by residues Arg-23, Asp-28, 47 to 49 (QAN), and Arg-59. Catalysis depends on His-62, which acts as the Proton acceptor. Substrate is bound by residues Lys-72 and His-119. The active-site Proton donor is Tyr-132. Substrate is bound by residues Glu-143 and Arg-167.

Belongs to the dTDP-4-dehydrorhamnose 3,5-epimerase family.

It functions in the pathway antibiotic biosynthesis; novobiocin biosynthesis. In terms of biological role, dTDP-6-deoxy-D-xylo-4-hexulose 3-epimerase that acts together with NovU to catalyze the formation of dTDP-4-keto-6-deoxy-5-C-methyl-L-lyxo-hexose from dTDP-4-keto-6-deoxy-D-glucose in the novobiocin biosynthesis pathway, an aminocoumarin family antibiotic that targets bacterial DNA gyrases. This Streptomyces niveus (Streptomyces spheroides) protein is dTDP-4-dehydrorhamnose 3-epimerase.